Reading from the N-terminus, the 273-residue chain is Probable ribosomal RNA small subunit methyltransferase A (273 aa).

Positions 23, 25, 50, 71, 95, and 110 each coordinate S-adenosyl-L-methionine.

This sequence belongs to the class I-like SAM-binding methyltransferase superfamily. rRNA adenine N(6)-methyltransferase family. RsmA subfamily.

Its subcellular location is the cytoplasm. Functionally, specifically dimethylates two adjacent adenosines in the loop of a conserved hairpin near the 3'-end of 16S rRNA in the 30S particle. May play a critical role in biogenesis of 30S subunits. The sequence is that of Probable ribosomal RNA small subunit methyltransferase A from Pyrococcus furiosus (strain ATCC 43587 / DSM 3638 / JCM 8422 / Vc1).